Here is a 340-residue protein sequence, read N- to C-terminus: Protein-arginine kinase (340 aa).

One can recognise a Phosphagen kinase C-terminal domain in the interval 14–241 (IVLSSRIRLA…YQIINQEKLA (228 aa)). ATP-binding positions include 17 to 21 (SSRIR), Arg-112, 163 to 167 (RASVM), and 194 to 199 (RGIYGE).

It belongs to the ATP:guanido phosphotransferase family.

The enzyme catalyses L-arginyl-[protein] + ATP = N(omega)-phospho-L-arginyl-[protein] + ADP + H(+). Functionally, catalyzes the specific phosphorylation of arginine residues in proteins. The chain is Protein-arginine kinase from Clostridium tetani (strain Massachusetts / E88).